Here is a 352-residue protein sequence, read N- to C-terminus: UDP-3-O-acylglucosamine N-acyltransferase (352 aa).

His246 serves as the catalytic Proton acceptor.

The protein belongs to the transferase hexapeptide repeat family. LpxD subfamily. Homotrimer.

It carries out the reaction a UDP-3-O-[(3R)-3-hydroxyacyl]-alpha-D-glucosamine + a (3R)-hydroxyacyl-[ACP] = a UDP-2-N,3-O-bis[(3R)-3-hydroxyacyl]-alpha-D-glucosamine + holo-[ACP] + H(+). It functions in the pathway bacterial outer membrane biogenesis; LPS lipid A biosynthesis. In terms of biological role, catalyzes the N-acylation of UDP-3-O-acylglucosamine using 3-hydroxyacyl-ACP as the acyl donor. Is involved in the biosynthesis of lipid A, a phosphorylated glycolipid that anchors the lipopolysaccharide to the outer membrane of the cell. The polypeptide is UDP-3-O-acylglucosamine N-acyltransferase (Chlorobium luteolum (strain DSM 273 / BCRC 81028 / 2530) (Pelodictyon luteolum)).